Here is a 105-residue protein sequence, read N- to C-terminus: Small cysteine and glycine repeat-containing protein 6 (105 aa).

A 13 X 2 AA repeats of CG region spans residues 4-83; it reads CGCGGCGGGC…HSCGCGCGCG (80 aa).

Belongs to the KRTAP type 28 family.

Functionally, in the hair cortex, hair keratin intermediate filaments are embedded in an interfilamentous matrix, consisting of hair keratin-associated proteins (KRTAP), which are essential for the formation of a rigid and resistant hair shaft through their extensive disulfide bond cross-linking with abundant cysteine residues of hair keratins. The matrix proteins include the high-sulfur and high-glycine-tyrosine keratins. The sequence is that of Small cysteine and glycine repeat-containing protein 6 from Homo sapiens (Human).